The sequence spans 176 residues: O-acetyl-ADP-ribose deacetylase (176 aa).

A Macro domain is found at 1-175 (MSGRINVVQG…LYQRLLGQYD (175 aa)). Substrate contacts are provided by residues 11–12 (DI), N25, 33–35 (GVD), and 122–126 (STGIY). The active-site Proton acceptor is D35.

The protein belongs to the MacroD-type family. YmdB subfamily. Homodimer. Interacts with RNase III.

It carries out the reaction 3''-O-acetyl-ADP-D-ribose + H2O = ADP-D-ribose + acetate + H(+). The enzyme catalyses 2''-O-acetyl-ADP-D-ribose + H2O = ADP-D-ribose + acetate + H(+). Deacetylates O-acetyl-ADP ribose to yield ADP-ribose and free acetate. Down-regulates ribonuclease 3 (RNase III) activity. Acts by interacting directly with the region of the ribonuclease that is required for dimerization/activation. This chain is O-acetyl-ADP-ribose deacetylase, found in Cronobacter turicensis (strain DSM 18703 / CCUG 55852 / LMG 23827 / z3032).